Consider the following 146-residue polypeptide: Probable flagellum biosynthesis repressor protein FlbT 1 (146 aa).

It belongs to the FlbT family.

Has a post-transcriptional repressor function in flagellum biogenesis. Associates with the 5'-UTR of fljK mRNA and promotes its degradation. The chain is Probable flagellum biosynthesis repressor protein FlbT 1 from Bradyrhizobium diazoefficiens (strain JCM 10833 / BCRC 13528 / IAM 13628 / NBRC 14792 / USDA 110).